The primary structure comprises 34 residues: MSDIN-like toxin proprotein 3 (34 aa).

A propeptide spanning residues 1–10 (MSDINTARLP) is cleaved from the precursor. A cross-link (cyclopeptide (Phe-Pro)) is located at residues 11 to 20 (FFQPPEFRPP). The propeptide occupies 21–34 (CVGDDIEMVLTRGE).

The protein belongs to the MSDIN fungal toxin family. Post-translationally, processed by the macrocyclase-peptidase enzyme POPB to yield a toxic cyclic decapeptide. POPB first removes 10 residues from the N-terminus. Conformational trapping of the remaining peptide forces the enzyme to release this intermediate rather than proceed to macrocyclization. The enzyme rebinds the remaining peptide in a different conformation and catalyzes macrocyclization of the N-terminal 10 residues.

Its function is as follows. Probable toxin that belongs to the MSDIN-like toxin family responsible for a large number of food poisoning cases and deaths. In Amanita bisporigera (Destroying angel), this protein is MSDIN-like toxin proprotein 3.